We begin with the raw amino-acid sequence, 234 residues long: HTH-type transcriptional regulator ArcR (234 aa).

An a nucleoside 3',5'-cyclic phosphate-binding site is contributed by Val40–Asp129. The 74-residue stretch at Lys155–Leu228 folds into the HTH crp-type domain. The segment at residues Ile188–His207 is a DNA-binding region (H-T-H motif).

Its subcellular location is the cytoplasm. Its function is as follows. Positively regulates the expression of the arcABDCR operon under anaerobic conditions, thus playing an essential role in arginine catabolism. May also control the expression of genes encoding proteins which are involved in anaerobic metabolism. Can bind cyclic AMP. This is HTH-type transcriptional regulator ArcR (arcR) from Staphylococcus aureus (strain USA300 / TCH1516).